A 126-amino-acid polypeptide reads, in one-letter code: Small ribosomal subunit protein uS13 (126 aa).

The interval arginine 91–lysine 126 is disordered. The segment covering arginine 108–lysine 126 has biased composition (basic residues).

Belongs to the universal ribosomal protein uS13 family. As to quaternary structure, part of the 30S ribosomal subunit. Forms a loose heterodimer with protein S19. Forms two bridges to the 50S subunit in the 70S ribosome.

Located at the top of the head of the 30S subunit, it contacts several helices of the 16S rRNA. In the 70S ribosome it contacts the 23S rRNA (bridge B1a) and protein L5 of the 50S subunit (bridge B1b), connecting the 2 subunits; these bridges are implicated in subunit movement. Contacts the tRNAs in the A and P-sites. This Streptomyces coelicolor (strain ATCC BAA-471 / A3(2) / M145) protein is Small ribosomal subunit protein uS13.